The following is a 193-amino-acid chain: Cysteine and glycine-rich protein 1 (193 aa).

The LIM zinc-binding 1 domain occupies 10–61 (CGVCQKTVYFAEEVQCEGNSFHKSCFLCMVCKKNLDSTTVAVHGEEIYCKSC). The Nuclear localization signal motif lies at 64-69 (KKYGPK). Ser81 bears the Phosphoserine mark. Lys84 is subject to N6-acetyllysine. Lys91 is covalently cross-linked (Glycyl lysine isopeptide (Lys-Gly) (interchain with G-Cter in SUMO2)). An N6-acetyllysine mark is found at Lys112, Lys131, Lys137, and Lys161. The LIM zinc-binding 2 domain maps to 119 to 170 (CPRCSQAVYAAEKVIGAGKSWHKACFRCAKCGKGLESTTLADKDGEIYCKGC). At Ser192 the chain carries Phosphoserine.

As to quaternary structure, interacts with ASCC1; ASCC2 and TRIP4.

The protein localises to the nucleus. Could play a role in neuronal development. This is Cysteine and glycine-rich protein 1 (CSRP1) from Homo sapiens (Human).